Reading from the N-terminus, the 463-residue chain is UDP-N-acetylmuramoylalanine--D-glutamate ligase (463 aa).

126-132 (GSNGKST) is an ATP binding site.

The protein belongs to the MurCDEF family.

It is found in the cytoplasm. It catalyses the reaction UDP-N-acetyl-alpha-D-muramoyl-L-alanine + D-glutamate + ATP = UDP-N-acetyl-alpha-D-muramoyl-L-alanyl-D-glutamate + ADP + phosphate + H(+). It functions in the pathway cell wall biogenesis; peptidoglycan biosynthesis. Cell wall formation. Catalyzes the addition of glutamate to the nucleotide precursor UDP-N-acetylmuramoyl-L-alanine (UMA). The polypeptide is UDP-N-acetylmuramoylalanine--D-glutamate ligase (Idiomarina loihiensis (strain ATCC BAA-735 / DSM 15497 / L2-TR)).